The chain runs to 28 residues: Ranatuerin-2AVb (28 aa).

A disulfide bridge connects residues cysteine 23 and cysteine 28.

Expressed by the skin glands.

The protein localises to the secreted. Has antibacterial activity. This chain is Ranatuerin-2AVb, found in Rana arvalis (Moor frog).